The chain runs to 60 residues: Homeobox protein engrailed-like B (60 aa).

The segment at residues 1 to 41 (VEQLQRLKSEFGASRYLTEARRQALAQELRLNEAQIKIWFQ) is a DNA-binding region (homeobox).

Belongs to the engrailed homeobox family.

It localises to the nucleus. This Myxine glutinosa (Atlantic hagfish) protein is Homeobox protein engrailed-like B.